An 81-amino-acid chain; its full sequence is MVVIRLARGGSKHRPFYNVIVTDSRSRRDGRFIERVGFYNPVANEKQERVRLNADRLNHWIAQGAQVSDSVAKLIKEQKAA.

It belongs to the bacterial ribosomal protein bS16 family.

In Neisseria meningitidis serogroup C (strain 053442), this protein is Small ribosomal subunit protein bS16.